A 1015-amino-acid polypeptide reads, in one-letter code: PHD finger protein 20-like protein 1 (1015 aa).

The region spanning 11 to 71 is the Tudor 1 domain; the sequence is ITFEIGARLE…SNRLRPLERP (61 aa). Residues K75 and K79 each participate in a glycyl lysine isopeptide (Lys-Gly) (interchain with G-Cter in SUMO2) cross-link. Positions 85 to 141 constitute a Tudor 2 domain; the sequence is FDFKAGEEVLARWTDCRYYPAKIEAINKEGTFTVQFYDGVIRCLKRMHIKAMPEDAK. Disordered regions lie at residues 183-206 and 309-367; these read AKNK…RDGG and EQAI…KAPK. Composition is skewed to polar residues over residues 186–197 and 315–346; these read KTGSKPRTSANS and KPQS…SSGK. S368 is subject to Phosphoserine. 2 disordered regions span residues 389–455 and 478–513; these read VINK…SSVP and CGSE…NPTS. Positions 404–415 are enriched in basic residues; sequence PCKHSERRRRSQ. S432 carries the post-translational modification Phosphoserine. Composition is skewed to polar residues over residues 443 to 453 and 480 to 489; these read SISSQNQQESS and SEVTGSQAPD. Residue K530 forms a Glycyl lysine isopeptide (Lys-Gly) (interchain with G-Cter in SUMO2) linkage. The span at 539-565 shows a compositional bias: basic and acidic residues; sequence EKTSTAFGKRKEKDKERKEKRDKDHYK. A disordered region spans residues 539–585; sequence EKTSTAFGKRKEKDKERKEKRDKDHYKPKQKKKKKKKKKSKQHDYSD. Positions 566-579 are enriched in basic residues; it reads PKQKKKKKKKKKSK. A PHD-type zinc finger spans residues 681 to 729; that stretch reads IVRCICELDEENGFMIQCEECLCWQHSVCMGLLEDSIPEQYICYICRDP. K849 is covalently cross-linked (Glycyl lysine isopeptide (Lys-Gly) (interchain with G-Cter in SUMO2)). A compositionally biased stretch (polar residues) spans 859 to 878; that stretch reads HSYQKPQSFSQDCHSLTDPG. Residues 859-889 form a disordered region; sequence HSYQKPQSFSQDCHSLTDPGSSDDDDVSSFE. The span at 879–889 shows a compositional bias: acidic residues; it reads SSDDDDVSSFE. K907 carries the N6-acetyllysine modification.

As to quaternary structure, interacts with methylated DNMT1 (DNMT1K142me1). Interacts with SOX2.

The protein localises to the nucleus. Its function is as follows. Is a negative regulator of proteasomal degradation of a set of methylated proteins, including DNMT1 and SOX2. Involved in the maintainance of embryonic stem cells pluripotency, through the regulation of SOX2 levels. This is PHD finger protein 20-like protein 1 (Phf20l1) from Rattus norvegicus (Rat).